We begin with the raw amino-acid sequence, 282 residues long: 3-methyl-2-oxobutanoate hydroxymethyltransferase (282 aa).

2 residues coordinate Mg(2+): Asp-44 and Asp-83. 3-methyl-2-oxobutanoate is bound by residues 44 to 45 (DS), Asp-83, and Lys-112. Glu-114 provides a ligand contact to Mg(2+). Glu-181 functions as the Proton acceptor in the catalytic mechanism.

Belongs to the PanB family. Homodecamer; pentamer of dimers. Mg(2+) is required as a cofactor.

The protein resides in the cytoplasm. The enzyme catalyses 3-methyl-2-oxobutanoate + (6R)-5,10-methylene-5,6,7,8-tetrahydrofolate + H2O = 2-dehydropantoate + (6S)-5,6,7,8-tetrahydrofolate. It participates in cofactor biosynthesis; coenzyme A biosynthesis. Its function is as follows. Catalyzes the reversible reaction in which hydroxymethyl group from 5,10-methylenetetrahydrofolate is transferred onto alpha-ketoisovalerate to form ketopantoate. The sequence is that of 3-methyl-2-oxobutanoate hydroxymethyltransferase from Pyrococcus abyssi (strain GE5 / Orsay).